A 504-amino-acid chain; its full sequence is Cytochrome P450 6B7 (504 aa).

Residue C445 participates in heme binding.

Belongs to the cytochrome P450 family. It depends on heme as a cofactor.

Its subcellular location is the endoplasmic reticulum membrane. It is found in the microsome membrane. It carries out the reaction an organic molecule + reduced [NADPH--hemoprotein reductase] + O2 = an alcohol + oxidized [NADPH--hemoprotein reductase] + H2O + H(+). The sequence is that of Cytochrome P450 6B7 (CYP6B7) from Helicoverpa armigera (Cotton bollworm).